Consider the following 335-residue polypeptide: NADH-quinone oxidoreductase subunit H (335 aa).

8 consecutive transmembrane segments (helical) span residues 15–35 (VVKA…LSFV), 81–101 (MIFT…FSII), 114–134 (IGLL…LFAG), 154–174 (VSYE…VGSF), 187–207 (LWFI…GVAV), 238–258 (FFVG…TLFF), 270–290 (QVPF…FILL), and 307–327 (WKFC…IVLY).

It belongs to the complex I subunit 1 family. As to quaternary structure, NDH-1 is composed of 13 different subunits. Subunits NuoA, H, J, K, L, M, N constitute the membrane sector of the complex.

The protein localises to the cell inner membrane. It catalyses the reaction a quinone + NADH + 5 H(+)(in) = a quinol + NAD(+) + 4 H(+)(out). Functionally, NDH-1 shuttles electrons from NADH, via FMN and iron-sulfur (Fe-S) centers, to quinones in the respiratory chain. The immediate electron acceptor for the enzyme in this species is believed to be ubiquinone. Couples the redox reaction to proton translocation (for every two electrons transferred, four hydrogen ions are translocated across the cytoplasmic membrane), and thus conserves the redox energy in a proton gradient. This subunit may bind ubiquinone. In Pseudomonas putida (strain GB-1), this protein is NADH-quinone oxidoreductase subunit H.